The sequence spans 231 residues: MKVVIVTSVRSLLDASIQFQKTACRHHCNYLSMQVVKEIEEFGTINEKNLEFDTWKDVIQNDEIDALVFYRVKQISISTGVLYESMMRNRTKPISMYFVRDCLAFDGNPPSFRMTSCNINAYNRSKIKDLIILMNMKTCNKKIIGEFIIDNFGSVDALLSIVNSNVTWVTSVINNSNGRGINIRVSNNKMLTITSFRRFVNKLKMYKTTKCASQLDNLCTEMNKMDIIDKK.

Belongs to the orthopoxvirus OPG058 family.

It localises to the host nucleus. The protein localises to the host nucleolus. This Homo sapiens (Human) protein is Protein OPG061 (OPG061).